Here is a 244-residue protein sequence, read N- to C-terminus: Putative lipoprotein LprA (244 aa).

The first 24 residues, Met1–Gly24, serve as a signal peptide directing secretion. Cys25 is lipidated: N-palmitoyl cysteine. Cys25 is lipidated: S-diacylglycerol cysteine.

This sequence belongs to the LppX/LprAFG lipoprotein family.

The protein localises to the cell membrane. This chain is Putative lipoprotein LprA (lprA), found in Mycobacterium tuberculosis (strain CDC 1551 / Oshkosh).